The sequence spans 220 residues: Small ribosomal subunit protein uS2 (220 aa).

The tract at residues 201–220 (LPPDGDLPEPPSEFEVKFKR) is disordered.

It belongs to the universal ribosomal protein uS2 family.

The polypeptide is Small ribosomal subunit protein uS2 (Staphylothermus marinus (strain ATCC 43588 / DSM 3639 / JCM 9404 / F1)).